Here is a 399-residue protein sequence, read N- to C-terminus: MSRYHTFTAADAVEYARQFGQIADPLALVTADEIGDGNLNLVFKIRDAAGMSRVIVKQALPYVRCVGESWPLTLDRARIEAETLLTHGQFCPQHTVNVLHHDAELAVMVQEDLSDHEIWRSELVKGKYYPQAAGQLAEYLAQTLFHTSDFYQSAQAKKAAVSRYTNPELCQITEDLFFTDPYIDHERNNFDPALLPEVLALRQDDALKLAVASLKHRFLSKAEALLHGDIHSGSIFVADGRLKAIDAEFGFYGPIGFDVGTALGNLLLNYCGLPGLAGPRDAAAGREQRLKDIHILWETFSHRFLALCEEKTQDSTLATAGYARLFLQQVWQDAVGYCGSELIRRTIGLAHVADLDSIADDEMRRACQRHALSLGRTLILAASRIDSIDDLIARIRQNG.

Residues Asn40, Lys57, and 111 to 113 (EDL) each bind ATP. Residue Asp229 coordinates substrate. An ATP-binding site is contributed by 246–248 (DAE). Arg344 contributes to the substrate binding site.

The protein belongs to the methylthioribose kinase family. As to quaternary structure, homodimer.

The catalysed reaction is 5-(methylsulfanyl)-D-ribose + ATP = 5-(methylsulfanyl)-alpha-D-ribose 1-phosphate + ADP + H(+). It participates in amino-acid biosynthesis; L-methionine biosynthesis via salvage pathway; S-methyl-5-thio-alpha-D-ribose 1-phosphate from S-methyl-5'-thioadenosine (hydrolase route): step 2/2. Its function is as follows. Catalyzes the phosphorylation of methylthioribose into methylthioribose-1-phosphate. In Yersinia enterocolitica serotype O:8 / biotype 1B (strain NCTC 13174 / 8081), this protein is Methylthioribose kinase.